A 1928-amino-acid chain; its full sequence is Myosin-1 (1928 aa).

In terms of domain architecture, Myosin N-terminal SH3-like spans 8–71 (SSNMIVWIPD…RISDVFPVNP (64 aa)). Residues 75–791 (DKVENMSELT…VLADLEKQKD (717 aa)) form the Myosin motor domain. 180-187 (GESGAGKT) is a binding site for ATP. The segment at 460-529 (IGLLDIAGFE…LQLTIDLIES (70 aa)) is actin-binding. Residues 629–641 (SSSAGVEANISNQ) are compositionally biased toward polar residues. Residues 629 to 657 (SSSAGVEANISNQEVKKSARTSTFKTTSS) form a disordered region. Residues 794-823 (LNNIMIKLTATIRGYTVRKEITYHLQKLKK) enclose the IQ domain. Positions 856–1911 (SSNDMTRTKK…FWKSRYESTM (1056 aa)) form a coiled coil.

Belongs to the TRAFAC class myosin-kinesin ATPase superfamily. Myosin family.

In terms of biological role, required for cell division. This is Myosin-1 (MYO1) from Saccharomyces cerevisiae (strain ATCC 204508 / S288c) (Baker's yeast).